The sequence spans 366 residues: Ribosomal RNA large subunit methyltransferase M (366 aa).

Residues Ser188, 221–224 (CPGG), Asp240, Asp260, and Asp277 each bind S-adenosyl-L-methionine. The Proton acceptor role is filled by Lys306.

This sequence belongs to the class I-like SAM-binding methyltransferase superfamily. RNA methyltransferase RlmE family. RlmM subfamily. In terms of assembly, monomer.

Its subcellular location is the cytoplasm. It carries out the reaction cytidine(2498) in 23S rRNA + S-adenosyl-L-methionine = 2'-O-methylcytidine(2498) in 23S rRNA + S-adenosyl-L-homocysteine + H(+). In terms of biological role, catalyzes the 2'-O-methylation at nucleotide C2498 in 23S rRNA. This is Ribosomal RNA large subunit methyltransferase M from Photorhabdus laumondii subsp. laumondii (strain DSM 15139 / CIP 105565 / TT01) (Photorhabdus luminescens subsp. laumondii).